The sequence spans 225 residues: Phosphatidylserine decarboxylase proenzyme (225 aa).

The active-site Schiff-base intermediate with substrate; via pyruvic acid is Ser-195. The residue at position 195 (Ser-195) is a Pyruvic acid (Ser); by autocatalysis.

Belongs to the phosphatidylserine decarboxylase family. PSD-A subfamily. Heterodimer of a large membrane-associated beta subunit and a small pyruvoyl-containing alpha subunit. Pyruvate is required as a cofactor. Post-translationally, is synthesized initially as an inactive proenzyme. Formation of the active enzyme involves a self-maturation process in which the active site pyruvoyl group is generated from an internal serine residue via an autocatalytic post-translational modification. Two non-identical subunits are generated from the proenzyme in this reaction, and the pyruvate is formed at the N-terminus of the alpha chain, which is derived from the carboxyl end of the proenzyme. The post-translation cleavage follows an unusual pathway, termed non-hydrolytic serinolysis, in which the side chain hydroxyl group of the serine supplies its oxygen atom to form the C-terminus of the beta chain, while the remainder of the serine residue undergoes an oxidative deamination to produce ammonia and the pyruvoyl prosthetic group on the alpha chain.

The protein resides in the cell membrane. The enzyme catalyses a 1,2-diacyl-sn-glycero-3-phospho-L-serine + H(+) = a 1,2-diacyl-sn-glycero-3-phosphoethanolamine + CO2. It functions in the pathway phospholipid metabolism; phosphatidylethanolamine biosynthesis; phosphatidylethanolamine from CDP-diacylglycerol: step 2/2. Catalyzes the formation of phosphatidylethanolamine (PtdEtn) from phosphatidylserine (PtdSer). This chain is Phosphatidylserine decarboxylase proenzyme, found in Gluconobacter oxydans (strain 621H) (Gluconobacter suboxydans).